Consider the following 369-residue polypeptide: S-(hydroxymethyl)glutathione dehydrogenase (369 aa).

7 residues coordinate Zn(2+): Cys40, His62, Cys92, Cys95, Cys98, Cys106, and Cys169.

It belongs to the zinc-containing alcohol dehydrogenase family. Class-III subfamily. As to quaternary structure, homodimer. Zn(2+) serves as cofactor.

Its subcellular location is the cytoplasm. It catalyses the reaction S-(hydroxymethyl)glutathione + NADP(+) = S-formylglutathione + NADPH + H(+). The catalysed reaction is S-(hydroxymethyl)glutathione + NAD(+) = S-formylglutathione + NADH + H(+). The enzyme catalyses a primary alcohol + NAD(+) = an aldehyde + NADH + H(+). It carries out the reaction a secondary alcohol + NAD(+) = a ketone + NADH + H(+). It catalyses the reaction S-nitrosoglutathione + NADH + H(+) = S-(hydroxysulfenamide)glutathione + NAD(+). Functionally, has high formaldehyde dehydrogenase activity in the presence of glutathione and catalyzes the oxidation of normal alcohols in a reaction that is not GSH-dependent. In addition, hemithiolacetals other than those formed from GSH, including omega-thiol fatty acids, also are substrates. Also acts as a S-nitroso-glutathione reductase by catalyzing the NADH-dependent reduction of S-nitrosoglutathione. This Escherichia coli O1:K1 / APEC protein is S-(hydroxymethyl)glutathione dehydrogenase (frmA).